Consider the following 178-residue polypeptide: Cysteine protease inhibitor 7 (178 aa).

2 cysteine pairs are disulfide-bonded: C41/C93 and C141/C147.

The protein belongs to the protease inhibitor I3 (leguminous Kunitz-type inhibitor) family.

The protein resides in the vacuole. Functionally, inhibitor of cysteine proteases. May protect the plant by inhibiting proteases of invading organisms. This is Cysteine protease inhibitor 7 from Solanum tuberosum (Potato).